The following is a 274-amino-acid chain: MQKVVKLNNIKIGNDLPFVLITGPCQIEGKDHALFMAEKLVKLTSKLEIPFIYKSSFDKANRTSVHGIRGVGIEKGLDILSKVKSEFDCPIVTDVHSESQCIETAEVADILQIPAFLCRQTDLLQAAAKTGKIVKVKKGQFLAPWDMKNVQTKLETFGVKDILFTERGACFGYNNLVSDMRSLAIMAELNVPVVFDATHSVQQPGGLGGSTGGERKYVELLAKAATSVGIAGMYMEVHQDPDNAPSDGPCMMKLDNLESILIKLKKYDKITKEK.

It belongs to the KdsA family.

Its subcellular location is the cytoplasm. The enzyme catalyses D-arabinose 5-phosphate + phosphoenolpyruvate + H2O = 3-deoxy-alpha-D-manno-2-octulosonate-8-phosphate + phosphate. Its pathway is carbohydrate biosynthesis; 3-deoxy-D-manno-octulosonate biosynthesis; 3-deoxy-D-manno-octulosonate from D-ribulose 5-phosphate: step 2/3. It participates in bacterial outer membrane biogenesis; lipopolysaccharide biosynthesis. The protein is 2-dehydro-3-deoxyphosphooctonate aldolase of Rickettsia peacockii (strain Rustic).